Reading from the N-terminus, the 538-residue chain is Guanine nucleotide-binding protein-like 3 (538 aa).

Over residues methionine 1 to lysine 45 the composition is skewed to basic residues. Positions methionine 1 to lysine 125 are disordered. The basic stretch occupies residues lysine 2–lysine 46. The stretch at alanine 54–serine 95 forms a coiled coil. A compositionally biased stretch (basic and acidic residues) spans alanine 59–isoleucine 94. Lysine 79 carries the N6-acetyllysine modification. Residue lysine 91 forms a Glycyl lysine isopeptide (Lys-Gly) (interchain with G-Cter in SUMO2) linkage. A phosphoserine mark is found at serine 95 and serine 101. Residues serine 95–aspartate 110 are compositionally biased toward acidic residues. Positions lysine 115–lysine 125 are enriched in basic residues. A CP-type G domain is found at cysteine 129–serine 307. Asparagine 176 to aspartate 179 is a binding site for GTP. Glycyl lysine isopeptide (Lys-Gly) (interchain with G-Cter in SUMO2) cross-links involve residues lysine 177, lysine 248, lysine 262, and lysine 270. Residue glycine 256–serine 263 participates in GTP binding. An intermediate region spans residues valine 277–serine 451. Aspartate 300–cysteine 303 serves as a coordination point for GTP. 2 stretches are compositionally biased toward basic and acidic residues: residues glutamate 460–glutamate 473 and glutamine 481–glutamate 491. Residues glutamate 460–aspartate 532 form an acidic region. The segment at glutamate 460–isoleucine 538 is disordered. 3 positions are modified to phosphoserine: serine 493, serine 505, and serine 518. Over residues proline 514–methionine 524 the composition is skewed to basic and acidic residues.

The protein belongs to the TRAFAC class YlqF/YawG GTPase family. Interacts with MDM2; this interaction stabilizes MDM2. Interaction with MDM2 occurs in the nucleoplasm and is triggered by a nucleolar release mechanism, such as mitosis-induced nucleolar disassembly. May interact with p53/TP53 via its basic domain. This interaction is most probably indirect and mediated by MDM2-binding. In terms of tissue distribution, expressed in testis.

It is found in the nucleus. It localises to the nucleolus. In terms of biological role, may be required to maintain the proliferative capacity of stem cells. Stabilizes MDM2 by preventing its ubiquitination, and hence proteasomal degradation. This chain is Guanine nucleotide-binding protein-like 3 (Gnl3), found in Rattus norvegicus (Rat).